We begin with the raw amino-acid sequence, 187 residues long: UPF0301 protein WIGBR1650 (187 aa).

Belongs to the UPF0301 (AlgH) family.

In Wigglesworthia glossinidia brevipalpis, this protein is UPF0301 protein WIGBR1650.